We begin with the raw amino-acid sequence, 217 residues long: Adenylate kinase (217 aa).

Residue 10 to 15 (GAGKGT) participates in ATP binding. The NMP stretch occupies residues 30–59 (STGDMFRAAMKEETDLGLEAKSYIDKGELV). AMP-binding positions include Thr-31, Arg-36, 57-59 (ELV), 85-88 (GFPR), and Gln-92. Residues 126 to 163 (GRRICKNCGATYHLVFNPPAKENVCDKCGGELYQREDD) form an LID region. Arg-127 contributes to the ATP binding site. Cys-130 and Cys-133 together coordinate Zn(2+). Residue 136–137 (TY) coordinates ATP. Residues Cys-150 and Cys-153 each coordinate Zn(2+). The AMP site is built by Arg-160 and Arg-171. Lys-199 is a binding site for ATP.

This sequence belongs to the adenylate kinase family. Monomer.

Its subcellular location is the cytoplasm. The catalysed reaction is AMP + ATP = 2 ADP. Its pathway is purine metabolism; AMP biosynthesis via salvage pathway; AMP from ADP: step 1/1. In terms of biological role, catalyzes the reversible transfer of the terminal phosphate group between ATP and AMP. Plays an important role in cellular energy homeostasis and in adenine nucleotide metabolism. The chain is Adenylate kinase from Bacillus licheniformis (strain ATCC 14580 / DSM 13 / JCM 2505 / CCUG 7422 / NBRC 12200 / NCIMB 9375 / NCTC 10341 / NRRL NRS-1264 / Gibson 46).